A 209-amino-acid chain; its full sequence is PRA1 family protein A1 (209 aa).

4 helical membrane-spanning segments follow: residues 51–73 (LYYY…VLTR), 77–99 (IFAA…GSFS), 144–164 (VFVL…SGLL), and 166–186 (VSVA…LRTP).

This sequence belongs to the PRA1 family.

It is found in the endoplasmic reticulum membrane. Its function is as follows. May be involved in both secretory and endocytic intracellular trafficking in the endosomal/prevacuolar compartments. This is PRA1 family protein A1 (PRA1A1) from Arabidopsis thaliana (Mouse-ear cress).